A 657-amino-acid polypeptide reads, in one-letter code: DNA mismatch repair protein MutL (657 aa).

The protein belongs to the DNA mismatch repair MutL/HexB family.

In terms of biological role, this protein is involved in the repair of mismatches in DNA. It is required for dam-dependent methyl-directed DNA mismatch repair. May act as a 'molecular matchmaker', a protein that promotes the formation of a stable complex between two or more DNA-binding proteins in an ATP-dependent manner without itself being part of a final effector complex. The polypeptide is DNA mismatch repair protein MutL (Streptococcus agalactiae serotype Ia (strain ATCC 27591 / A909 / CDC SS700)).